Here is a 183-residue protein sequence, read N- to C-terminus: Large ribosomal subunit protein uL22 (183 aa).

Residues K163–E183 are disordered. A compositionally biased stretch (basic residues) spans A165–E183.

The protein belongs to the universal ribosomal protein uL22 family.

This chain is Large ribosomal subunit protein uL22 (rpl-17), found in Pectinaria gouldii (Trumpet worm).